Here is a 333-residue protein sequence, read N- to C-terminus: MATIKDVAKMAGVSTTTVSHVINKTRFVAKETEQQVLQAIKNLNYSPSAVARSLKVNTTKSIGMIVTTCETPYFAEIIHSVEELCYRQGYSLFLCNTQNNPEKIKNHLDMLAKKRVDGLLVMCAEYTQNSLNLLATFEDLPMVVMDWGPFNENTDLIQDNSFSGGYIATKYLIDNGHKDIAIISGELKKTTAVMRYQGFEKAMQEANLAINPDWIMEGFFEPEDGYECMNKILVQDKLPTAVFCCNDVMALGAISAIGEKGLKVPDDISVIGYDNIHASRFFSPPLTTIHQSKSRLGVQAINLLFKRISEKGKEHEIIEIYPELVIRKSVKTL.

In terms of domain architecture, HTH lacI-type spans 2 to 56 (ATIKDVAKMAGVSTTTVSHVINKTRFVAKETEQQVLQAIKNLNYSPSAVARSLKV). Residues 4–23 (IKDVAKMAGVSTTTVSHVIN) constitute a DNA-binding region (H-T-H motif). The DNA-binding element occupies 48-56 (SAVARSLKV). Residues Y73, K189, T191, F220, and D274 each contribute to the hypoxanthine site.

Homodimer.

Its pathway is purine metabolism; purine nucleotide biosynthesis [regulation]. Functionally, is the main repressor of the genes involved in the de novo synthesis of purine nucleotides, regulating purB, purC, purEK, purF, purHD, purL, purMN and guaBA expression. PurR is allosterically activated to bind its cognate DNA by binding the purine corepressors, hypoxanthine or guanine, thereby effecting transcription repression. The chain is HTH-type transcriptional repressor PurR from Histophilus somni (strain 129Pt) (Haemophilus somnus).